Reading from the N-terminus, the 518-residue chain is Retinal dehydrogenase 2 (518 aa).

At Y168 the chain carries Phosphotyrosine. Residues 184 to 186, 210 to 213, and 264 to 266 each bind NAD(+); these read IPW, KPAE, and STE. E286 serves as the catalytic Proton acceptor. C320 serves as the catalytic Nucleophile. A Phosphoserine modification is found at S351. NAD(+) contacts are provided by residues 366 to 370 and E417; that span reads KQYNK.

Belongs to the aldehyde dehydrogenase family. In terms of assembly, homotetramer.

Its subcellular location is the cytoplasm. The enzyme catalyses retinal + NAD(+) + H2O = retinoate + NADH + 2 H(+). It carries out the reaction all-trans-retinal + NAD(+) + H2O = all-trans-retinoate + NADH + 2 H(+). The catalysed reaction is all-trans-13,14-dihydroretinal + NAD(+) + H2O = all-trans-13,14-dihydroretinoate + NADH + 2 H(+). It functions in the pathway cofactor metabolism; retinol metabolism. Its function is as follows. Catalyzes the NAD-dependent oxidation of aldehyde substrates, such as all-trans-retinal and all-trans-13,14-dihydroretinal, to their corresponding carboxylic acids, all-trans-retinoate and all-trans-13,14-dihydroretinoate, respectively. Retinoate signaling is critical for the transcriptional control of many genes, for instance it is crucial for initiation of meiosis in both male and female. Recognizes retinal as substrate, both in its free form and when bound to cellular retinol-binding protein. Can metabolize octanal and decanal, but has only very low activity with benzaldehyde, acetaldehyde and propanal. Displays complete lack of activity with citral. The chain is Retinal dehydrogenase 2 (ALDH1A2) from Homo sapiens (Human).